A 254-amino-acid chain; its full sequence is Triosephosphate isomerase (254 aa).

12 to 14 (NWK) serves as a coordination point for substrate. H99 acts as the Electrophile in catalysis. The Proton acceptor role is filled by E169. Residues G175, S214, and 235–236 (GG) contribute to the substrate site.

Belongs to the triosephosphate isomerase family. As to quaternary structure, homodimer.

The protein resides in the cytoplasm. The enzyme catalyses D-glyceraldehyde 3-phosphate = dihydroxyacetone phosphate. It functions in the pathway carbohydrate biosynthesis; gluconeogenesis. It participates in carbohydrate degradation; glycolysis; D-glyceraldehyde 3-phosphate from glycerone phosphate: step 1/1. Its function is as follows. Involved in the gluconeogenesis. Catalyzes stereospecifically the conversion of dihydroxyacetone phosphate (DHAP) to D-glyceraldehyde-3-phosphate (G3P). The sequence is that of Triosephosphate isomerase from Brucella abortus biovar 1 (strain 9-941).